The following is a 131-amino-acid chain: Large ribosomal subunit protein bL21 (131 aa).

The interval 111-131 (VAAATGTADARRAAHNASAKE) is disordered.

It belongs to the bacterial ribosomal protein bL21 family. In terms of assembly, part of the 50S ribosomal subunit. Contacts protein L20.

This protein binds to 23S rRNA in the presence of protein L20. In Cereibacter sphaeroides (strain ATCC 17029 / ATH 2.4.9) (Rhodobacter sphaeroides), this protein is Large ribosomal subunit protein bL21.